Consider the following 204-residue polypeptide: Colicin-A (204 aa).

2 helical membrane passes run 139 to 161 and 165 to 187; these read SWVL…LGAY and LGVP…GALI.

Belongs to the channel forming colicin family.

The protein resides in the cell membrane. Functionally, this colicin is a channel-forming colicin. This class of transmembrane toxins depolarize the cytoplasmic membrane, leading to dissipation of cellular energy. In terms of biological role, colicins are polypeptide toxins produced by and active against E.coli and closely related bacteria. The protein is Colicin-A (caa) of Escherichia coli.